The primary structure comprises 269 residues: Ribonuclease HII (269 aa).

An RNase H type-2 domain is found at 83–269 (YLIAGVDEVG…HRMSFLTNIL (187 aa)). Residues aspartate 89, glutamate 90, and aspartate 185 each coordinate a divalent metal cation.

Belongs to the RNase HII family. Mn(2+) serves as cofactor. It depends on Mg(2+) as a cofactor.

The protein resides in the cytoplasm. It carries out the reaction Endonucleolytic cleavage to 5'-phosphomonoester.. Endonuclease that specifically degrades the RNA of RNA-DNA hybrids. This is Ribonuclease HII from Clostridium botulinum (strain Loch Maree / Type A3).